The sequence spans 483 residues: Leukocyte immunoglobulin-like receptor subfamily A member 2 (483 aa).

The first 23 residues, 1-23, serve as a signal peptide directing secretion; that stretch reads MTPILTVLICLGLSLGPRTHVQA. The Extracellular segment spans residues 24–449; the sequence is GHLPKPTLWA…QHPQDYTVEN (426 aa). Ig-like C2-type domains follow at residues 27–113, 117–222, 224–313, and 324–413; these read PKPT…DPLE, TGAY…GVSK, PSLS…DPLD, and PSLS…SDPL. Cys-49 and Cys-97 are disulfide-bonded. Residues Asn-64, Asn-103, and Asn-138 are each glycosylated (N-linked (GlcNAc...) asparagine). Cystine bridges form between Cys-143-Cys-195 and Cys-244-Cys-295. Asn-279, Asn-300, and Asn-339 each carry an N-linked (GlcNAc...) asparagine glycan. Cys-344 and Cys-395 are disulfide-bonded. Tyr-404 carries the post-translational modification 3'-nitrotyrosine. N-linked (GlcNAc...) asparagine glycosylation occurs at Asn-429. A helical transmembrane segment spans residues 450–470; it reads LIRMGVAGLVLVVLGILLFEA. Residues 471-483 lie on the Cytoplasmic side of the membrane; the sequence is QHSQRSLQDAAGR.

Homodimer. Detected on the surface of all peripheral blood monocytes, neutrophils, basophils and eosinophils (at protein level). Expression levels are very low or not detectable on monocytes, T-cells, B-cells, dendritic cells and natural killer (NK) cells.

The protein resides in the cell membrane. The protein localises to the secreted. Its function is as follows. Part of the innate immune responses against microbial infection. Specifically recognizes a set of N-terminally truncated immunoglobulins that are produced via cleavage by proteases from a range of pathogenic bacteria and fungi, including L.pneumophila, M.hyorhinis, S.pneumoniae, S.aureus and C.albicans. Recognizes epitopes that are in part in the variable region of the immunoglobulin light chains, but requires also the constant region for signaling. Binds to a subset of cleaved IgM, IgG3 and IgG4 molecules, but does not bind cleaved IgA1. Binding of N-terminally truncated immunoglobulins mediates activation of neutrophils. In monocytes, activation leads to the release of CSF2, CF3, IL6, CXCL8 and CCL3 and down-regulates responses to bacterial lipopolysaccharide (LPS), possibly via down-regulation of TLR4 expression and reduced signaling via TLR4. In eosinophils, activation by ligand binding leads to the release of RNASE2, IL4 and leukotriene C4. Does not bind class I MHC antigens. This Homo sapiens (Human) protein is Leukocyte immunoglobulin-like receptor subfamily A member 2 (LILRA2).